The primary structure comprises 460 residues: 5-hydroxytryptamine receptor 2C (460 aa).

The signal sequence occupies residues 1 to 32; it reads MVNLGNAVRSLLMHLIGLLVWQFDISISPVAA. The Extracellular portion of the chain corresponds to 33–56; it reads IVTDTFNSSDGGRLFQFPDGVQNW. The helical transmembrane segment at 57–81 threads the bilayer; that stretch reads PALSIVVIIIMTIGGNILVIMAVSM. The Cytoplasmic portion of the chain corresponds to 82–87; sequence EKKLHN. A helical transmembrane segment spans residues 88 to 112; the sequence is ATNYFLMSLAIADMLVGLLVMPLSL. Over 113 to 129 the chain is Extracellular; sequence LAILYDYVWPLPRYLCP. Residues Cys-128 and Cys-208 are joined by a disulfide bond. The chain crosses the membrane as a helical span at residues 130-152; that stretch reads VWISLDVLFSTASIMHLCAISLD. Thr-140 is a binding site for ergotamine. The short motif at 152–154 is the DRY motif; important for ligand-induced conformation changes element; it reads DRY. Topologically, residues 153–168 are cytoplasmic; that stretch reads RYVAIRNPIEHSRFNS. The chain crosses the membrane as a helical span at residues 169–190; the sequence is RTKAIMKIAIVWAISIGVSVPI. Over 191 to 214 the chain is Extracellular; it reads PVIGLRDESKVFVNNTTCVLNDPN. Residues Asn-204 and Asn-205 are each glycosylated (N-linked (GlcNAc...) asparagine). An ergotamine-binding site is contributed by Leu-210. Residues 215–237 form a helical membrane-spanning segment; sequence FVLIGSFVAFFIPLTIMVITYFL. Residues 238–313 lie on the Cytoplasmic side of the membrane; it reads TIYVLRRQTL…AINNEKKASK (76 aa). The interval 276 to 301 is disordered; it reads EEENAPNPNPDQKPRRKKKEKRPRGT. Basic residues predominate over residues 289 to 299; it reads PRRKKKEKRPR. Residues 314–338 form a helical membrane-spanning segment; the sequence is VLGIVFFVFLIMWCPFFITNILSVL. Cys-339 and Cys-343 are oxidised to a cystine. The Extracellular segment spans residues 339–349; sequence CGKACNQKLME. The chain crosses the membrane as a helical span at residues 350–372; it reads KLLNVFVWIGYVCSGINPLVYTL. The NPxxY motif; important for ligand-induced conformation changes and signaling signature appears at 366–370; sequence NPLVY. The Cytoplasmic portion of the chain corresponds to 373-460; that stretch reads FNKIYRRAFS…NVVSERISSV (88 aa). The PDZ-binding motif lies at 458 to 460; it reads SSV.

This sequence belongs to the G-protein coupled receptor 1 family. In terms of assembly, interacts with MPDZ. Interacts with ARRB2. Interacts with MPP3; this interaction stabilizes the receptor at the plasma membrane and prevents the desensitization of the HTR2C receptor-mediated calcium response.

It localises to the cell membrane. G-protein coupled receptor for 5-hydroxytryptamine (serotonin). Also functions as a receptor for various drugs and psychoactive substances, including ergot alkaloid derivatives, 1-2,5,-dimethoxy-4-iodophenyl-2-aminopropane (DOI) and lysergic acid diethylamide (LSD). Ligand binding causes a conformation change that triggers signaling via guanine nucleotide-binding proteins (G proteins) and modulates the activity of downstream effectors. HTR2C is coupled to G(q)/G(11) G alpha proteins and activates phospholipase C-beta, releasing diacylglycerol (DAG) and inositol 1,4,5-trisphosphate (IP3) second messengers that modulate the activity of phosphatidylinositol 3-kinase and promote the release of Ca(2+) ions from intracellular stores, respectively. Beta-arrestin family members inhibit signaling via G proteins and mediate activation of alternative signaling pathways. Regulates neuronal activity via the activation of short transient receptor potential calcium channels in the brain, and thereby modulates the activation of pro-opiomelanocortin neurons and the release of CRH that then regulates the release of corticosterone. Plays a role in the regulation of appetite and eating behavior, responses to anxiogenic stimuli and stress. Plays a role in insulin sensitivity and glucose homeostasis. The protein is 5-hydroxytryptamine receptor 2C of Rattus norvegicus (Rat).